Consider the following 1101-residue polypeptide: Coiled-coil domain-containing protein 150 (1101 aa).

Coiled-coil stretches lie at residues 106–299 (RLES…DLTS), 398–680 (AAHA…KEDN), 712–940 (DSEI…NYEQ), and 970–1033 (VRNK…EAHR). Residues 1055-1071 (SGEDRWQEKDQDVKHDV) are compositionally biased toward basic and acidic residues. Residues 1055–1101 (SGEDRWQEKDQDVKHDVMSNQSVLHRWERKQNLRPMPKKYHSEVQRK) are disordered.

This is Coiled-coil domain-containing protein 150 (CCDC150) from Homo sapiens (Human).